A 140-amino-acid polypeptide reads, in one-letter code: Nucleoside diphosphate kinase (140 aa).

The ATP site is built by K10, F58, R86, T92, R103, and N113. H116 (pros-phosphohistidine intermediate) is an active-site residue.

It belongs to the NDK family. Homohexamer. Requires Mg(2+) as cofactor.

Its subcellular location is the cytoplasm. It carries out the reaction a 2'-deoxyribonucleoside 5'-diphosphate + ATP = a 2'-deoxyribonucleoside 5'-triphosphate + ADP. The enzyme catalyses a ribonucleoside 5'-diphosphate + ATP = a ribonucleoside 5'-triphosphate + ADP. Its function is as follows. Major role in the synthesis of nucleoside triphosphates other than ATP. The ATP gamma phosphate is transferred to the NDP beta phosphate via a ping-pong mechanism, using a phosphorylated active-site intermediate. The polypeptide is Nucleoside diphosphate kinase (Methanocaldococcus jannaschii (strain ATCC 43067 / DSM 2661 / JAL-1 / JCM 10045 / NBRC 100440) (Methanococcus jannaschii)).